We begin with the raw amino-acid sequence, 266 residues long: F-actin-capping protein subunit beta (266 aa).

The protein belongs to the F-actin-capping protein beta subunit family. As to quaternary structure, component of the F-actin capping complex, composed of a heterodimer of an alpha and a beta subunit.

The protein localises to the cytoplasm. Its subcellular location is the cytoskeleton. It localises to the actin patch. Functionally, F-actin-capping proteins bind in a Ca(2+)-independent manner to the fast growing ends of actin filaments (barbed end) thereby blocking the exchange of subunits at these ends. Unlike other capping proteins (such as gelsolin and severin), these proteins do not sever actin filaments. This is F-actin-capping protein subunit beta (cap2) from Aspergillus oryzae (strain ATCC 42149 / RIB 40) (Yellow koji mold).